Consider the following 199-residue polypeptide: NAD(P)H dehydrogenase (quinone) (199 aa).

A Flavodoxin-like domain is found at 4-190 (VLVLYYSTYG…EGARHQGELI (187 aa)). Residues 10-15 (STYGHV) and 78-80 (TRF) contribute to the FMN site. Tyrosine 12 provides a ligand contact to NAD(+). A substrate-binding site is contributed by tryptophan 98. Residues 113 to 119 (STATQHG) and histidine 134 contribute to the FMN site.

This sequence belongs to the WrbA family. Requires FMN as cofactor.

The enzyme catalyses a quinone + NADH + H(+) = a quinol + NAD(+). It carries out the reaction a quinone + NADPH + H(+) = a quinol + NADP(+). The sequence is that of NAD(P)H dehydrogenase (quinone) from Cupriavidus metallidurans (strain ATCC 43123 / DSM 2839 / NBRC 102507 / CH34) (Ralstonia metallidurans).